The sequence spans 658 residues: Non-reducing end beta-L-arabinofuranosidase (658 aa).

Residues H142, 192–194 (DGH), H270, and E322 contribute to the beta-L-arabinofuranose site. The Proton donor/acceptor role is filled by E322. E338, C340, C417, and C418 together coordinate Zn(2+). Catalysis depends on C417, which acts as the Nucleophile; S-glycosyl-cysteine intermediate.

It belongs to the glycosyl hydrolase 127 family. Homodimer in solution. Requires Zn(2+) as cofactor.

The enzyme catalyses beta-L-arabinofuranosyl-(1-&gt;2)-beta-L-arabinofuranose + H2O = 2 beta-L-arabinofuranose. Strongly inhibited in the presence of thiol modifiers, suggesting a crucial role for cysteine residues in catalysis. Slightly inhibited by EDTA. Beta-L-arabinofuranosidase that removes the beta-L-arabinofuranose residue from the non-reducing end of various substrates, including beta-L-arabinofuranosyl-hydroxyproline (Ara-Hyp), Ara-beta-1,2-Ara-beta-Hyp (Ara(2)-Hyp), Ara-beta-1,2-Ara-beta-1,2-Ara-beta-Hyp (Ara(3)-Hyp), and beta-L-arabinofuranosyl-(1-&gt;2)-1-O-methyl-beta-L-arabinofuranose. In the presence of 1-alkanols, shows transglycosylation activity, retaining the anomeric configuration of the arabinofuranose residue. The polypeptide is Non-reducing end beta-L-arabinofuranosidase (Bifidobacterium longum subsp. longum (strain ATCC 15707 / DSM 20219 / JCM 1217 / NCTC 11818 / E194b)).